The following is an 89-amino-acid chain: Small ribosomal subunit protein uS15 (89 aa).

Belongs to the universal ribosomal protein uS15 family. In terms of assembly, part of the 30S ribosomal subunit. Forms a bridge to the 50S subunit in the 70S ribosome, contacting the 23S rRNA.

Its function is as follows. One of the primary rRNA binding proteins, it binds directly to 16S rRNA where it helps nucleate assembly of the platform of the 30S subunit by binding and bridging several RNA helices of the 16S rRNA. Forms an intersubunit bridge (bridge B4) with the 23S rRNA of the 50S subunit in the ribosome. The protein is Small ribosomal subunit protein uS15 of Escherichia coli O139:H28 (strain E24377A / ETEC).